A 1023-amino-acid polypeptide reads, in one-letter code: MFHLRTCAAKLRPLTASQTVKTFSQNRPAAARTFQQIRCYSAPVAAEPFLSGTSSNYVEEMYCAWLENPKSVHKSWDIFFRNTNAGAPPGTAYQSPLPLSRGSLAAVAHAQSLVEAQPNVDKLVEDHLAVQSLIRAYQIRGHHVAQLDPLGILDADLDSSVPADIISSTDKLGFYGLDESDLDKVFHLPTTTFIGGQESALPLREIIRRLEMAYCQHIGVEFMFINDLEQCQWIRQKFETPGIMQFTNEEKRTLLARLVRSTRFEEFLQRKWSSEKRFGLEGCEVLIPALKTIIDKSSENGVDYVIMGMPHRGRLNVLANVIRKELEQIFCQFDSKLEAADEGSGDVKYHLGMYHRRINRVTDRNITLSLVANPSHLEAADPVVMGKTKAEQFYCGDTEGKKVMSILLHGDAAFAGQGIVYETFHLSDLPSYTTHGTVHVVVNNQIGFTTDPRMARSSPYPTDVARVVNAPIFHVNSDDPEAVMYVCKVAAEWRSTFHKDVVVDLVCYRRNGHNEMDEPMFTQPLMYKQIRKQKPVLQKYAELLVSQGVVNQPEYEEEISKYDKICEEAFARSKDEKILHIKHWLDSPWPGFFTLDGQPRSMSCPSTGLTEDILTHIGNVASSVPVENFTIHGGLSRILKTRGEMVKNRTVDWALAEYMAFGSLLKEGIHIRLSGQDVERGTFSHRHHVLHDQNVDKRTCIPMNHLWPNQAPYTVCNSSLSEYGVLGFELGFAMASPNALVLWEAQFGDFHNTAQCIIDQFICPGQAKWVRQNGIVLLLPHGMEGMGPEHSSARPERFLQMCNDDPDVLPDLKEANFDINQLYDCNWVVVNCSTPGNFFHVLRRQILLPFRKPLIIFTPKSLLRHPEARSSFDEMLPGTHFQRVIPEDGPAAQNPENVKRLLFCTGKVYYDLTRERKARDMVGQVAITRIEQLSPFPFDLLLKEVQKYPSAELAWCQEEHKNQGYYDYVKPRLRTTISRAKPVWYAGRDPAAAPATGNKKTHLTELQRLLDTAFDLDIFKNFS.

The transit peptide at 1–40 (MFHLRTCAAKLRPLTASQTVKTFSQNRPAAARTFQQIRCY) directs the protein to the mitochondrion. Position 74 is an N6-succinyllysine (Lys-74). A Phosphoserine modification is found at Ser-100. The Ca(2+) site is built by His-143, Asp-156, and Asp-158. Arg-312 is a binding site for thiamine diphosphate. The residue at position 401 (Lys-401) is an N6-acetyllysine. Residues Asp-411, Asn-444, and Ile-446 each coordinate thiamine diphosphate. The Mg(2+) site is built by Asp-411, Asn-444, and Ile-446. Lys-534 participates in a covalent cross-link: Glycyl lysine isopeptide (Lys-Gly) (interchain with G-Cter in ubiquitin). Lys-564 carries the N6-succinyllysine modification. Thiamine diphosphate is bound at residue Gln-676. Position 970 is an N6-acetyllysine (Lys-970).

The protein belongs to the alpha-ketoglutarate dehydrogenase family. As to quaternary structure, homodimer. The 2-oxoglutarate dehydrogenase complex is composed of OGDH (2-oxoglutarate dehydrogenase; E1), DLST (dihydrolipoamide succinyltransferase; E2), DLD (dihydrolipoamide dehydrogenase; E3) and the assembly factor KGD4. It contains multiple copies of the three enzymatic components (E1, E2 and E3). In the nucleus, the 2-oxoglutarate dehydrogenase complex associates with KAT2A. Interacts with ABHD11; this interaction maintains the functional lipoylation of the 2-oxoglutarate dehydrogenase complex. Thiamine diphosphate serves as cofactor. Mg(2+) is required as a cofactor.

The protein localises to the mitochondrion. Its subcellular location is the nucleus. It carries out the reaction N(6)-[(R)-lipoyl]-L-lysyl-[protein] + 2-oxoglutarate + H(+) = N(6)-[(R)-S(8)-succinyldihydrolipoyl]-L-lysyl-[protein] + CO2. Its activity is regulated as follows. Calcium ions and ADP stimulate, whereas ATP and NADH reduce catalytic activity. Its function is as follows. 2-oxoglutarate dehydrogenase (E1o) component of the 2-oxoglutarate dehydrogenase complex (OGDHC). Participates in the first step, rate limiting for the overall conversion of 2-oxoglutarate to succinyl-CoA and CO(2) catalyzed by the whole OGDHC. Catalyzes the irreversible decarboxylation of 2-oxoglutarate (alpha-ketoglutarate) via the thiamine diphosphate (ThDP) cofactor and subsequent transfer of the decarboxylated acyl intermediate on an oxidized dihydrolipoyl group that is covalently amidated to the E2 enzyme (dihydrolipoyllysine-residue succinyltransferase or DLST). Plays a key role in the Krebs (citric acid) cycle, which is a common pathway for oxidation of fuel molecules, including carbohydrates, fatty acids, and amino acids. Can catalyze the decarboxylation of 2-oxoadipate in vitro, but at a much lower rate than 2-oxoglutarate. Mainly active in the mitochondrion. A fraction of the 2-oxoglutarate dehydrogenase complex also localizes in the nucleus and is required for lysine succinylation of histones: associates with KAT2A on chromatin and provides succinyl-CoA to histone succinyltransferase KAT2A. The chain is 2-oxoglutarate dehydrogenase complex component E1 from Pongo abelii (Sumatran orangutan).